Here is a 148-residue protein sequence, read N- to C-terminus: Ribosomal RNA large subunit methyltransferase H (148 aa).

Residues leucine 62, glycine 94, and 113–118 (LSLLTL) contribute to the S-adenosyl-L-methionine site.

The protein belongs to the RNA methyltransferase RlmH family. As to quaternary structure, homodimer.

The protein resides in the cytoplasm. The enzyme catalyses pseudouridine(1915) in 23S rRNA + S-adenosyl-L-methionine = N(3)-methylpseudouridine(1915) in 23S rRNA + S-adenosyl-L-homocysteine + H(+). Functionally, specifically methylates the pseudouridine at position 1915 (m3Psi1915) in 23S rRNA. The polypeptide is Ribosomal RNA large subunit methyltransferase H (Deinococcus geothermalis (strain DSM 11300 / CIP 105573 / AG-3a)).